Here is a 257-residue protein sequence, read N- to C-terminus: Metallo-beta-lactamase type 2 (257 aa).

An N-terminal signal peptide occupies residues 1-30; that stretch reads MKKNTLLKVGLCVSLLGTTQFVSTISSVQA. Histidine 116, histidine 118, aspartate 120, histidine 179, and cysteine 198 together coordinate Zn(2+). The substrate site is built by lysine 201 and asparagine 210. Histidine 240 provides a ligand contact to Zn(2+).

It belongs to the metallo-beta-lactamase superfamily. Class-B beta-lactamase family. Monomer. Zn(2+) serves as cofactor.

Its subcellular location is the periplasm. The enzyme catalyses a beta-lactam + H2O = a substituted beta-amino acid. Confers resistance to the different beta-lactams antibiotics (penicillin, cephalosporin and carbapenem) via the hydrolysis of the beta-lactam ring. The protein is Metallo-beta-lactamase type 2 of Bacillus sp. (strain 170).